The following is a 97-amino-acid chain: MASYHVSHDSYQSPGPSPLYQPIIEAPPPPYPPTRTRYQDYYGGYGQPHPPPLRPYRSDHEYYGDGEYVGCFPFLRSCLTTLCCCWFVEQCCFRSRY.

The disordered stretch occupies residues 1-27 (MASYHVSHDSYQSPGPSPLYQPIIEAP). The segment covering 15 to 27 (GPSPLYQPIIEAP) has biased composition (pro residues). A helical membrane pass occupies residues 68–88 (YVGCFPFLRSCLTTLCCCWFV).

This sequence belongs to the CYSTM1 family. In terms of assembly, homodimer and heterodimers. Interacts with CYSTM3, CYSTM4, CYSTM5, CYSTM6, CYSTM10, WIH1/CYSTM13 and CYSTM11. Binds weakly to CYSTM1, CYSTM2 and CYSTM12. As to expression, mostly expressed in siliques and, to a lower extent, in stems, roots, leaves and flowers.

Its subcellular location is the cell membrane. Its function is as follows. Involved in resistance to abiotic stress. This Arabidopsis thaliana (Mouse-ear cress) protein is Protein CYSTEINE-RICH TRANSMEMBRANE MODULE 7.